The sequence spans 198 residues: MSELLIELDNYLAAGLHIGTQQKTSDMEKYIFRVRSDGLYVLDIQKTDERIRQIAKLLARYDPEDILVVATRQYGQAPVKKFGEVTGAKTIPGRFIPGTLTNPTYAKFIEPKIIVVTDPRSDAQAVLESKQNGIPVIALCDTENLLSFVDIAIPVNNKGRKAIALVYWLLARQILRERGTIPEDGDLDIEATDFELKF.

It belongs to the universal ribosomal protein uS2 family.

This chain is Small ribosomal subunit protein uS2, found in Methanobrevibacter smithii (strain ATCC 35061 / DSM 861 / OCM 144 / PS).